The following is an 872-amino-acid chain: Protein SCD5 (872 aa).

2 disordered regions span residues 1-98 and 209-239; these read MSFD…SGGD and PKPR…TGDQ. Over residues 48-85 the composition is skewed to polar residues; sequence FWDQGSRSHSDTTLSYRNNHSNTAADNATNVSSPQKDN. A KKRVK motif; Required for interaction with GLC7, endocytosis and actin cytoskeleton organization motif is present at residues 272–276; it reads KKVRF. 2 disordered regions span residues 280 to 321 and 338 to 358; these read ITFQ…LDFT and SGLV…KKVL. 2 stretches are compositionally biased toward polar residues: residues 284-296 and 339-348; these read DPPN…SNNS and GLVSSLPSEQ. Repeat copies occupy residues 405-424, 439-458, 479-498, 534-545, 564-575, 593-604, 608-619, 623-634, 636-647, 650-661, 683-694, and 717-728. The interval 405–448 is 3 X 20 AA approximate repeats; the sequence is QLPLEPLKPTATGSANHLVREEYNQGLHPSNGAIQTGLQPLKPT. Thr416 and Thr450 each carry phosphothreonine; by PRK1. A disordered region spans residues 460 to 489; sequence HMEQPQSIKPSSTPETVTNSGGLQPLKPTA. A compositionally biased stretch (polar residues) spans 462–481; sequence EQPQSIKPSSTPETVTNSGG. Thr490 carries the phosphothreonine; by PRK1 modification. Disordered regions lie at residues 516-571 and 591-620; these read QFTN…TYSN and AFPP…QRSQ. The interval 534–728 is 9 X 12 AA approximate repeats; the sequence is SPNITLPQSN…QNAANSYFQS (195 aa). Residue Ser564 is modified to Phosphoserine. Residues 594–620 show a composition bias toward polar residues; it reads PQNTLPQHQQSHLLSPQNTIPQHQRSQ. The interval 649-681 is disordered; the sequence is ISPQNTYTNNQQQPQHLPPPPPPRAQQQQQGAI. Positions 651–663 are enriched in low complexity; it reads PQNTYTNNQQQPQ. The span at 697 to 727 shows a compositional bias: polar residues; sequence LVPTQPSYTNSPSIQSPNFLSPQNAANSYFQ. Disordered stretches follow at residues 697 to 758 and 806 to 838; these read LVPT…ISSF and NSDI…QFPF. Residues 728–745 show a composition bias toward low complexity; that stretch reads SLLSSSPSPNPTPSNAST. 2 stretches are compositionally biased toward polar residues: residues 746–758 and 806–815; these read VNGN…ISSF and NSDIHSQPNK. The segment covering 823-835 has biased composition (low complexity); that stretch reads QQVHQQQQQQQQQ.

As to quaternary structure, interacts (via KKVRF motif) with phosphatase GLC7. Phosphorylation by PRK1 and/or AKL1 on Thr-416, Thr-450 and Thr-490 of repeats 1-1, 1-2 and/or 1-3 negatively regulates SCD5 function in endocytosis and actin cytoskeleton organization.

The protein localises to the membrane. Its function is as follows. Regulates both fluid phase and receptor-mediated endocytosis. Involved in vesicular transport at a late stage of the secretory pathway. Regulates actin cytoskeleton organization. The sequence is that of Protein SCD5 (SCD5) from Saccharomyces cerevisiae (strain ATCC 204508 / S288c) (Baker's yeast).